The following is a 317-amino-acid chain: Testis-expressed protein 19.2 (317 aa).

Acidic residues predominate over residues 64-75 (MELSEASSEPEE). The tract at residues 64–113 (MELSEASSEPEEWPGLSGGEGQGHLPHGISVSAGSGAQGPQPVPTELGPQ) is disordered. Residues 101–145 (QGPQPVPTELGPQEAVPLDLGPEDAEWTQALPWRFDGLSPCSHWL) are important for interaction with piRNA.

In terms of assembly, interacts with UBR2. Interacts with piRNA-associated proteins DDX4, EDC4, MAEL, PIWIL1, PIWIL2, RANBP9 and TDRD6. As to expression, specifically expressed in somatic cells of male gonad lineage.

The protein resides in the cytoplasm. Its function is as follows. May be required during spermatogenesis, probably by participating in the repression of retrotransposable elements and prevent their mobilization. With its paralog, Tex19.1, collaborates with the Piwi-interacting RNA (piRNA) pathway, which mediates the repression of transposable elements during meiosis by forming complexes composed of piRNAs and Piwi proteins. Interacts with Piwi proteins and directly binds piRNAs, a class of 24 to 30 nucleotide RNAs that are generated by a Dicer-independent mechanism and are primarily derived from transposons and other repeated sequence elements. This is Testis-expressed protein 19.2 (Tex19.2) from Mus musculus (Mouse).